The chain runs to 439 residues: Probable E3 ubiquitin-protein ligase makorin-1 (439 aa).

C3H1-type zinc fingers lie at residues 18–45, 48–74, and 163–190; these read WTKH…HDLS, KQTM…HTKP, and EMKK…HGDV. Residues 73 to 118 form a disordered region; it reads KPSKQDEVPSSKPSMPLTAAPLAGTPEPVSDGPGGTTGAQEKPQGS. Residues 191-218 form a makorin-type Cys-His region; it reads CDMCGLQVLHPSDTSQRSQHIRACIEAH. The RING-type zinc-finger motif lies at 236–290; the sequence is CGVCMEVVFEKTNPSERRFGILSNCCHCYCLKCIRKWRSAKQFESKIIKSCPECR. A C3H1-type 4 zinc finger spans residues 319–348; it reads GMGTKPCRYFDEGRGTCPFGANCFYKHAFP. The disordered stretch occupies residues 352 to 371; that stretch reads LEEPQPQRRQNGSNGRNRNT. A compositionally biased stretch (low complexity) spans 358–368; that stretch reads QRRQNGSNGRN.

It catalyses the reaction S-ubiquitinyl-[E2 ubiquitin-conjugating enzyme]-L-cysteine + [acceptor protein]-L-lysine = [E2 ubiquitin-conjugating enzyme]-L-cysteine + N(6)-ubiquitinyl-[acceptor protein]-L-lysine.. Its pathway is protein modification; protein ubiquitination. Its function is as follows. E3 ubiquitin ligase catalyzing the covalent attachment of ubiquitin moieties onto substrate proteins. This chain is Probable E3 ubiquitin-protein ligase makorin-1, found in Danio rerio (Zebrafish).